A 166-amino-acid chain; its full sequence is NAD(P)H-quinone oxidoreductase subunit I, chloroplastic (166 aa).

4Fe-4S ferredoxin-type domains are found at residues 55 to 84 (GRIH…VDWQ) and 95 to 124 (VNYS…MTEE). Positions 64, 67, 70, 74, 104, 107, 110, and 114 each coordinate [4Fe-4S] cluster.

This sequence belongs to the complex I 23 kDa subunit family. In terms of assembly, NDH is composed of at least 16 different subunits, 5 of which are encoded in the nucleus. [4Fe-4S] cluster is required as a cofactor.

It is found in the plastid. The protein resides in the chloroplast thylakoid membrane. The catalysed reaction is a plastoquinone + NADH + (n+1) H(+)(in) = a plastoquinol + NAD(+) + n H(+)(out). It catalyses the reaction a plastoquinone + NADPH + (n+1) H(+)(in) = a plastoquinol + NADP(+) + n H(+)(out). NDH shuttles electrons from NAD(P)H:plastoquinone, via FMN and iron-sulfur (Fe-S) centers, to quinones in the photosynthetic chain and possibly in a chloroplast respiratory chain. The immediate electron acceptor for the enzyme in this species is believed to be plastoquinone. Couples the redox reaction to proton translocation, and thus conserves the redox energy in a proton gradient. In Coreopsis petrophiloides (Tickseed), this protein is NAD(P)H-quinone oxidoreductase subunit I, chloroplastic.